Here is a 186-residue protein sequence, read N- to C-terminus: Peptide deformylase (186 aa).

Residues Cys-113 and His-157 each coordinate Fe cation. Residue Glu-158 is part of the active site. His-161 is a Fe cation binding site.

The protein belongs to the polypeptide deformylase family. It depends on Fe(2+) as a cofactor.

It carries out the reaction N-terminal N-formyl-L-methionyl-[peptide] + H2O = N-terminal L-methionyl-[peptide] + formate. Its function is as follows. Removes the formyl group from the N-terminal Met of newly synthesized proteins. Requires at least a dipeptide for an efficient rate of reaction. N-terminal L-methionine is a prerequisite for activity but the enzyme has broad specificity at other positions. This Malacoplasma penetrans (strain HF-2) (Mycoplasma penetrans) protein is Peptide deformylase.